We begin with the raw amino-acid sequence, 212 residues long: Leucyl/phenylalanyl-tRNA--protein transferase (212 aa).

The protein belongs to the L/F-transferase family.

It is found in the cytoplasm. The enzyme catalyses N-terminal L-lysyl-[protein] + L-leucyl-tRNA(Leu) = N-terminal L-leucyl-L-lysyl-[protein] + tRNA(Leu) + H(+). It catalyses the reaction N-terminal L-arginyl-[protein] + L-leucyl-tRNA(Leu) = N-terminal L-leucyl-L-arginyl-[protein] + tRNA(Leu) + H(+). It carries out the reaction L-phenylalanyl-tRNA(Phe) + an N-terminal L-alpha-aminoacyl-[protein] = an N-terminal L-phenylalanyl-L-alpha-aminoacyl-[protein] + tRNA(Phe). Functionally, functions in the N-end rule pathway of protein degradation where it conjugates Leu, Phe and, less efficiently, Met from aminoacyl-tRNAs to the N-termini of proteins containing an N-terminal arginine or lysine. The polypeptide is Leucyl/phenylalanyl-tRNA--protein transferase (Paracoccus denitrificans (strain Pd 1222)).